The sequence spans 815 residues: Calpain-3 (815 aa).

Positions 7 to 36 (ASVAPRTAAEPRSPGPVPHPAQSKATEAGG) are disordered. Residues 74 to 417 (LYVDPEFPPD…FTKLEICNLT (344 aa)) form the Calpain catalytic domain. Catalysis depends on residues cysteine 129, histidine 334, and asparagine 358. Positions 418–586 (ADALQSDKLQ…KRNLSEEVEN (169 aa)) are domain III. The segment at 587 to 649 (TISVDRPVPI…QESEEQQQFR (63 aa)) is linker. A disordered region spans residues 605–646 (SNKELGVDQESEEGKGKTSPDKQEQSPQPQPGSSDQESEEQQ). Residues 616-628 (EEGKGKTSPDKQE) are compositionally biased toward basic and acidic residues. Low complexity predominate over residues 629 to 639 (QSPQPQPGSSD). EF-hand domains are found at residues 643–677 (EEQQQFRNIFKQIAGDDMEICADELKKVLNTVVNK), 686–719 (FTLESCRSMIALMDTDGSGKLNLQEFHHLWNKIK), 716–751 (NKIKAWQKIFKHYDTDQSGTINSYEMRNAVNDAGFH), and 781–815 (VRLEGMFRAFHAFDKDGDGIIKLNVLEWLQLTMYA). A domain IV region spans residues 650 to 815 (NIFKQIAGDD…LEWLQLTMYA (166 aa)). 18 residues coordinate Ca(2+): alanine 656, aspartate 659, glutamate 661, glutamate 666, aspartate 699, aspartate 701, serine 703, lysine 705, glutamate 710, aspartate 729, aspartate 731, serine 733, threonine 735, glutamate 740, aspartate 794, aspartate 796, aspartate 798, and isoleucine 800.

Belongs to the peptidase C2 family. In terms of assembly, homodimer; via EF-hand domain 4. Interacts with TTN/titin. Interacts with CMYA5; this interaction, which results in CMYA5 proteolysis, may protect CAPN3 from autolysis. Interacts with SIMC1. Interacts with UTP25; the interaction is required for CAPN3 translocation to the nucleolus.

Its subcellular location is the cytoplasm. It localises to the nucleus. The protein resides in the nucleolus. It catalyses the reaction Broad endopeptidase activity.. Activated by micromolar concentrations of calcium and inhibited by calpastatin. In terms of biological role, calcium-regulated non-lysosomal thiol-protease. Proteolytically cleaves CTBP1. Mediates, with UTP25, the proteasome-independent degradation of p53/TP53. The protein is Calpain-3 (CAPN3) of Macaca fascicularis (Crab-eating macaque).